The following is a 132-amino-acid chain: Small ribosomal subunit protein uS8 (132 aa).

The protein belongs to the universal ribosomal protein uS8 family. In terms of assembly, part of the 30S ribosomal subunit. Contacts proteins S5 and S12.

Functionally, one of the primary rRNA binding proteins, it binds directly to 16S rRNA central domain where it helps coordinate assembly of the platform of the 30S subunit. In Bacillus mycoides (strain KBAB4) (Bacillus weihenstephanensis), this protein is Small ribosomal subunit protein uS8.